A 315-amino-acid chain; its full sequence is Endolytic peptidoglycan transglycosylase RlpA (315 aa).

Positions 1-19 (MGLALEKVCFLGVIFLISA) are cleaved as a signal peptide. Cys-20 carries the N-palmitoyl cysteine lipid modification. Cys-20 carries the S-diacylglycerol cysteine lipid modification. A compositionally biased stretch (basic and acidic residues) spans 68–79 (SDSQDSNTKDQP). Residues 68-92 (SDSQDSNTKDQPLDNGMRDSSSIQR) form a disordered region. The 74-residue stretch at 242–315 (SVSGGKFSLQ…YNQNAVLTRE (74 aa)) folds into the SPOR domain.

The protein belongs to the RlpA family.

The protein localises to the cell membrane. Its function is as follows. Lytic transglycosylase with a strong preference for naked glycan strands that lack stem peptides. The polypeptide is Endolytic peptidoglycan transglycosylase RlpA (Helicobacter pylori (strain ATCC 700392 / 26695) (Campylobacter pylori)).